A 744-amino-acid polypeptide reads, in one-letter code: Cell division cycle protein 27 homolog B (744 aa).

Residues 101–134 (AAGHYLLGLIYKYTDRRKNAAQQFKQSLTIDPLL) form a TPR 1 repeat. Residues 180–199 (NEERNSTSTKNTSSEDYSPR) are compositionally biased toward polar residues. 2 disordered regions span residues 180 to 218 (NEER…NFHS) and 359 to 390 (ENMD…NDQE). The segment covering 363–374 (EGVRGEPFDDSR) has biased composition (basic and acidic residues). The span at 375–387 (PNTASTTGSMASN) shows a compositional bias: polar residues. 7 TPR repeats span residues 450 to 483 (GWVL…SPYC), 518 to 551 (PQSW…NPRF), 553 to 585 (YAHT…DTRH), 587 to 619 (NAWY…NPSS), 621 to 653 (VIMS…DRKN), 655 to 687 (LPMY…APSE), and 688 to 721 (SSVY…KPPA).

This sequence belongs to the APC3/CDC27 family. As to quaternary structure, the APC/C is composed of at least 10 subunits. Can homodimerize. Interacts with APC2, APC10, FZR2 and FZR3. Interacts with PANS1. Interacts with SAMBA. As to expression, specifically expressed in dividing and elongating cells.

The protein localises to the nucleus. It functions in the pathway protein modification; protein ubiquitination. Functionally, component of the anaphase promoting complex/cyclosome (APC/C), a cell cycle-regulated E3 ubiquitin-protein ligase complex that controls progression through mitosis and the G1 phase of the cell cycle. The APC/C complex controls several key steps in the cell cycle by mediating ubiquitination and subsequent degradation of target proteins such as cyclins. The APC/C complex is required for the female gametophyte development and is involved in several aspect of development by controlling cell division and cell elongation. Involved in the control of endoreduplication. Functionally redundant with CDC27A in the control of gametophyte development. This chain is Cell division cycle protein 27 homolog B (CDC27B), found in Arabidopsis thaliana (Mouse-ear cress).